A 381-amino-acid chain; its full sequence is 1-deoxy-D-xylulose 5-phosphate reductoisomerase (381 aa).

Residues threonine 10, glycine 11, serine 12, isoleucine 13, glycine 36, lysine 37, asparagine 38, and asparagine 120 each contribute to the NADPH site. A 1-deoxy-D-xylulose 5-phosphate-binding site is contributed by lysine 121. Glutamate 122 contributes to the NADPH binding site. Position 146 (aspartate 146) interacts with Mn(2+). Positions 147, 148, 172, and 195 each coordinate 1-deoxy-D-xylulose 5-phosphate. Glutamate 148 is a binding site for Mn(2+). Glycine 201 contacts NADPH. The 1-deoxy-D-xylulose 5-phosphate site is built by serine 208, asparagine 213, lysine 214, and glutamate 217. Glutamate 217 serves as a coordination point for Mn(2+).

Belongs to the DXR family. Requires Mg(2+) as cofactor. It depends on Mn(2+) as a cofactor.

It catalyses the reaction 2-C-methyl-D-erythritol 4-phosphate + NADP(+) = 1-deoxy-D-xylulose 5-phosphate + NADPH + H(+). The protein operates within isoprenoid biosynthesis; isopentenyl diphosphate biosynthesis via DXP pathway; isopentenyl diphosphate from 1-deoxy-D-xylulose 5-phosphate: step 1/6. In terms of biological role, catalyzes the NADPH-dependent rearrangement and reduction of 1-deoxy-D-xylulose-5-phosphate (DXP) to 2-C-methyl-D-erythritol 4-phosphate (MEP). The polypeptide is 1-deoxy-D-xylulose 5-phosphate reductoisomerase (Lysinibacillus sphaericus (strain C3-41)).